The primary structure comprises 510 residues: MIWHVQNENFILDSTRILMKAFHLLLFHGSFIFPECILIFGLILLLMIDSTSDQKDRPWFYFISSTSLVMSITALLFRWKEEPIISFSGNFQTNNFNEIFQFLILLCSTLCIPLSVEYIECTEMAITEFLLFVLTATLGGMFLCGANDLITIFVAPECFSLCSYLLSGYTKRDVRSNEATTKYLLMGGASSSILVHGFSWLYGSSGGEIELQEIVNGLINTQMYNSPGISIALISTTVGIGFKLSPAPFHQWTPDVYEGSPTPVVAFLSVTSKVAASASATRIFDIPFYFSSNEWHLLLEILAILSMILGNLIAITQTSMKRMLAYSSIGQIGYVIIGIIVGDSNDGYASMITYMLFYISMNLGTFARIVSFGLRTGTDNIRDYAGLYTKDPFLALSSALCLLSLGGLPPLAGFFGKLYLFWCGWQAGLYFLVSIGLLTSVVSIYYYLKIIKLLMTGRNQEITPHVRNYRRSPLRSNNSIEWSMTVCVIASTIPGISMNPILAIAQDTLF.

11 helical membrane-spanning segments follow: residues 24–44, 59–79, 99–119, 124–144, 149–169, 183–203, 295–315, 323–343, 347–367, 395–415, and 418–438; these read LLLF…GLIL, WFYF…LFRW, IFQF…VEYI, MAIT…MFLC, LITI…LSGY, YLLM…WLYG, WHLL…LIAI, MLAY…IVGD, GYAS…GTFA, ALSS…AGFF, and LYLF…IGLL.

It belongs to the complex I subunit 2 family. As to quaternary structure, NDH is composed of at least 16 different subunits, 5 of which are encoded in the nucleus.

Its subcellular location is the plastid. It localises to the chloroplast thylakoid membrane. It catalyses the reaction a plastoquinone + NADH + (n+1) H(+)(in) = a plastoquinol + NAD(+) + n H(+)(out). It carries out the reaction a plastoquinone + NADPH + (n+1) H(+)(in) = a plastoquinol + NADP(+) + n H(+)(out). Functionally, NDH shuttles electrons from NAD(P)H:plastoquinone, via FMN and iron-sulfur (Fe-S) centers, to quinones in the photosynthetic chain and possibly in a chloroplast respiratory chain. The immediate electron acceptor for the enzyme in this species is believed to be plastoquinone. Couples the redox reaction to proton translocation, and thus conserves the redox energy in a proton gradient. This is NAD(P)H-quinone oxidoreductase subunit 2, chloroplastic from Asparagus officinalis (Garden asparagus).